Here is a 245-residue protein sequence, read N- to C-terminus: PF03932 family protein CutC (245 aa).

This sequence belongs to the CutC family.

The protein resides in the cytoplasm. This chain is PF03932 family protein CutC, found in Sinorhizobium medicae (strain WSM419) (Ensifer medicae).